The sequence spans 129 residues: Small ribosomal subunit protein uS11 (129 aa).

It belongs to the universal ribosomal protein uS11 family. In terms of assembly, part of the 30S ribosomal subunit. Interacts with proteins S7 and S18. Binds to IF-3.

Functionally, located on the platform of the 30S subunit, it bridges several disparate RNA helices of the 16S rRNA. Forms part of the Shine-Dalgarno cleft in the 70S ribosome. The polypeptide is Small ribosomal subunit protein uS11 (Lactobacillus gasseri (strain ATCC 33323 / DSM 20243 / BCRC 14619 / CIP 102991 / JCM 1131 / KCTC 3163 / NCIMB 11718 / NCTC 13722 / AM63)).